The primary structure comprises 155 residues: Sec-independent protein translocase protein TatB (155 aa).

A helical transmembrane segment spans residues 1–21 (MFGMGFFEILVVLVVAIIFLG). The interval 109–155 (SLENNAPPKHLNKEVSNREVFHNEPPKEIELIANNNTTKHDKEKEHV) is disordered. Composition is skewed to basic and acidic residues over residues 119-138 (LNKE…KEIE) and 146-155 (TKHDKEKEHV).

This sequence belongs to the TatB family. In terms of assembly, the Tat system comprises two distinct complexes: a TatABC complex, containing multiple copies of TatA, TatB and TatC subunits, and a separate TatA complex, containing only TatA subunits. Substrates initially bind to the TatABC complex, which probably triggers association of the separate TatA complex to form the active translocon.

The protein resides in the cell inner membrane. Functionally, part of the twin-arginine translocation (Tat) system that transports large folded proteins containing a characteristic twin-arginine motif in their signal peptide across membranes. Together with TatC, TatB is part of a receptor directly interacting with Tat signal peptides. TatB may form an oligomeric binding site that transiently accommodates folded Tat precursor proteins before their translocation. This Helicobacter acinonychis (strain Sheeba) protein is Sec-independent protein translocase protein TatB.